The primary structure comprises 47 residues: Accessory gland peptide Acp33A (47 aa).

Positions 1 to 21 are cleaved as a signal peptide; that stretch reads MLPSKRVPFLFTIILFLAGLG.

As to expression, main cells of accessory gland and seminal fluid.

It is found in the secreted. Functionally, responsible for physiological and behavioral changes in mated female flies. This is Accessory gland peptide Acp33A (Acp33A) from Drosophila melanogaster (Fruit fly).